We begin with the raw amino-acid sequence, 3394 residues long: MNNDFMKNEKDDYDKVNEEEYSLENFRGIDMNNNVDISNMNNNLNDVGELINIDNNDKYDEDQLSLIKESLEYGELLLSNVKEEDENNRREHFKKNDYMKDTEDVHYKESKIGQDKRFMHSLCVKELKSTEEGELFDDEKYKDKDTLINMLRKKLEIKIKDYNLIMDTLILTKEECSKKEEQLKDYKMKYNKMEKECYSLKNEIERKNNEKHLNIGSFSFYKNEYDDMKYKLLKCEEKNKILLNKNQELHQTIIQMKNDSYNQNIKFKKDIDVLTEDKKNILIQNKNFTKQNKILIDKYLRQEKIIYKLKKHNEEQEIIIKECHKKIEFVNKNSVNHLNKVRDVLNKSLIKSEEHVKLYTNLKKENDSLKIEYNKSKTNIQQLNEQLVNYKNFIKEMEKKYKQLVVKNNSLFSITHDFINLKNSNIIIIRRTSDMKQIFKMYNLDIEHFNEQDHLSVIYIYEILYNTNDNNNNDNDNNNDNNNNNNNNNDNNNNNNNDNNNNNNNYNNIMMMIENMNSGNHPNSNNLHNYRHNTNDENNLSSLKTSFRYKINNKSGKSRSIKSRSHFSGDNEYIQDQLSNREMKDHYNYIERYNHSSNRNDIHNLYYMEENVSHNNNKSDYDEDGDAENNNYYIKIKKNKYKKLNDLLNKAQMKIITLTRANEMFEKYCSNIKNTLIRDDMKKFRKPDISDVHILHNEKIYLEKLLNEKLNYIKDIEKKLDELHGVINKNKEDIYILQVEKQTLIKVISSVYDYTKMESENHIFKMNTTWNKMLNNVHMSSNKDYNNQNNQNIENNQNIENNQNNQNIENNQNIENNQNNQNNQNNQNNQNNQNNQNNQNNAGIHISPDDFLKYRMSLEKFIQFTIKEHIVYIMKDEKKKTSNIIKESISLKKKHTKKSIINNNNDNNNEDDDDNDMLSVMYSNDDVIKNKRKENNKEILEEHVSFSSFSNNEYIAHSFNSILLQLSNYIFNIECKQMEYFKNSNLLSYVDDYTITIELFYRLKKYNNIFSIEQILGTQYPSILQKLHDGIYCLKDNNKKKNNDGDNKSQEDDDGNKKKNNDGDNKSQEDDDGNKKKNNDGDNKSQEDDYGNKKKNNDDDDDDSYKIELIVDELNKCKKNYTDEELYELMKGSDFDIFKKYKNFYLNHFININNIFSTIISFHIHNIEDKYKKVYERYFNLFNFNFSNVELSFDLLIRRFDKILRLTKKYEQLLEENYEKIKNKNEKEEYLHACIKELEMNLERYNNEKIILDEQINEKEKKINIINEKYLILEKEYEEYQNKNIFINAQIENLEKEKKQLQEEIIQKDMINVKLNEKNCDIIKIYEKEKQYLHTLLQENKDSHNYLKDKFENLLNLNEKLKYDHDISLNKINTLWLEEKENNKKNTFHMNNLRVENNNLLLKMKELQNKYNIIKKELNERIKQINVFRNNVSTLSLRDNRSTRGSIHQINNMYMNNTHLGFMGASKINNNISNLYYSNMIHMSHRGSIIKNKEDAEGNSTQARMNNKDSTDNIINNIHNTDNINNMNNINNNTLNSINSNHLYYPFPFHNNVNSPKMVGMCDVTLASGVNKKDDFLLNLEENEENSFLEYEIRIKSLQEELCDKESEILKIKGEKNILITCIETWKCFCKNSKEEISRLKEICKEQLEKHKEFLLINKSNEDKLKYINSLLCDEKDKYDIVVKDIKNNMRNEIDKLNNDINEKSYEIKLLKHENNNLINEMNILKNKETENMNIKQKEEDYIKLIKKDKTNIQNEYNDLLEKYNEVVVKNNMLYNDMNVLLKEHKEEIFLLKENIKILQKDNTYLNDMFKNQINYVDNNLLKNRLDQLFNINQDLQKHLDTNQKHLEQLKYDYIEIKERLKIEKTKINKQEKYIIQLQKDNNLILNDFNSTTTTTNNNNNNDNNNDNNNDNNDNNNDTYQQFIHSLKANLENSRLELKELSNLNEKIQLSDEKNRMKITILEDKLFKNEKDKMKLQQIIDDNNKNYMIQYNKLKTNLDMLSEENRMLLLNKEEYEKQIEQLNHDHKLFISTKNNDIQIIENEKLQEQVDQYITTINEKDKIIVHLNLQIKKLANQNEHMRSRCDIFNVAHSQDNIKNDHMVVGEDIMGDTNHDVNKNIDQGTNQHINQGTNQHINQGTNQHDTCDGPNYNYVKVQNATNREDNKNKERNLSQEIYKYINENIDLTSELEKKNDMLENYKNELKEKNEEIYKLNNDIDMLSNNCKKLKESIMMMEKYKIIMNNNIQEKDEIIENLKNKYNNKLDDLINNYSVVDKSIVSCFEDSNIMSPSCNDILNVFNNLSKSNKKVCTNMDICNENMDSISSINNVNNINNVNNINNVNNINNVNNINNVKNIVDINNYLVNNLQLNKDNDNIIIIKFNILKLFKLGSCYLYIINRNLKEIQMLKNQILSLEESIKSLNEFINNLKNENEKNELIKINNFEEILKLKNNLQDNESCIQNLNNYLKKNEELNKINVKNIFKYKGYIIHLIQQSNVFCKIFKHFNENKIIDQSIINKLLYLKKSFDFYMYDSVIQEIRENKNIIINQDFLTDEYFKHIQTFTKTCNVLIQRGYLSILKDTNNDFFIQNKQSNQQGNQNGNHINMCNIYPDDEINVTADQQIFDGTENVQQSLQNEEDYVNNEEMYTDKMDLDNNMNGDDDDDDDDDDDDDNNNNNNNNNNNNNNNMGDEDNHLVNAFNNHNLLTNGNVKSDQINNETLERYEENIIQNIYTNDNVDNNQVIENINKILIKDKQDIINNDELKNEHNNLIRLINESIENAHNLENVYVQNDANNLINDNIKKEETLTYVDEKDNVSNESNSKCDDDKKENEDIIQAKNENYPVSTHYDNNDDINKDNINNDNNNDNINDDNNNDNINNDNNNDNINNDNINNDNINNDNNNDNNNDNSNNGFVCELSSNINDFNNILNVNKDNFQGINKSNNFSTNLSEYNYDAYVKIVEAGSALENKKQQDKKRKYFSDSEITKENGYLGESNSIKIRKVSVGGDNDNNDDDNNDDNDDDDNDDDNNDDDNNNDDDNDDSYDDEEKEQENYSNDVNTELNNHVTFEDISVHNNIQENKKNYFSNVHENTFNLHVDENVHEDLQNYEDYVNNNNNNNDDDNEEESNNSCYIISSDDEGDKKNVSKQNDDDEDDDDNGDDDDNEDDDDNEDDDNGDDDDNEDDDNGDDDDNEDDNYDDEDNDNYENEDDDNYANEDDDNYENDDDDNYENDDDDNYENDDDNYENDDDDNYENGDDDNDNDHNDDNNDEEKYSCHDDKNEHTNNDLLNIDHDNNKNNITDELYSTYNVSVSHNKDPSNKENEIQNLISIDSSNENDENDENDENDENDENDENDENDENDENDENDEKDENDENDENDENFDNNNEGTLNEMNSEE.

Low complexity-rich tracts occupy residues 471-508 (NNND…NYNN), 515-528 (NMNS…NNLH), and 786-841 (NNQN…NQNN). Disordered regions lie at residues 471–539 (NNND…DENN), 779–844 (MSSN…NAGI), 1038–1099 (NKKK…NNDD), 1892–1918 (TTTT…NNND), 2648–2693 (KMDL…DNHL), 2835–2909 (AKNE…NSNN), 3000–3057 (VSVG…DVNT), and 3107–3394 (DYVN…NSEE). A compositionally biased stretch (basic and acidic residues) spans 1038–1097 (NKKKNNDGDNKSQEDDDGNKKKNNDGDNKSQEDDDGNKKKNNDGDNKSQEDDYGNKKKNN). A compositionally biased stretch (acidic residues) spans 2657–2671 (GDDDDDDDDDDDDDN). Positions 2672–2686 (NNNNNNNNNNNNNNM) are enriched in low complexity. Over residues 2836 to 2846 (KNENYPVSTHY) the composition is skewed to polar residues. 2 stretches are compositionally biased toward low complexity: residues 2855–2865 (DNINNDNNNDN) and 2872–2909 (NDNI…NSNN). 2 stretches are compositionally biased toward acidic residues: residues 3007–3047 (DNND…EEKE) and 3147–3257 (DDDE…DDND). Residues 3258 to 3292 (NDHNDDNNDEEKYSCHDDKNEHTNNDLLNIDHDNN) are compositionally biased toward basic and acidic residues. Residues 3300-3309 (LYSTYNVSVS) are compositionally biased toward polar residues. Over residues 3310–3320 (HNKDPSNKENE) the composition is skewed to basic and acidic residues. Residues 3321–3330 (IQNLISIDSS) are compositionally biased toward polar residues. Residues 3331-3379 (NENDENDENDENDENDENDENDENDENDENDENDEKDENDENDENDENF) are compositionally biased toward acidic residues. A compositionally biased stretch (polar residues) spans 3385–3394 (GTLNEMNSEE).

The sequence is that of Protein PFC0760c from Plasmodium falciparum (isolate 3D7).